The primary structure comprises 78 residues: Major outer membrane lipoprotein Lpp (78 aa).

Residues 1–20 (MKATKLVLGAVILGSTLLAG) form the signal peptide. Residue Cys21 is the site of N-palmitoyl cysteine attachment. Cys21 carries S-diacylglycerol cysteine lipidation. 2 repeats span residues 24–34 (NAKIDQLSSDV) and 38–48 (NAKVDQLSNDV). Residues 27–75 (IDQLSSDVQTLNAKVDQLSNDVNAMRSDVQAAKDDAARANQRLDNMATK) adopt a coiled-coil conformation. Lys78 is subject to N6-murein peptidoglycan lysine.

This sequence belongs to the Lpp family. In terms of assembly, homotrimer.

The protein localises to the cell outer membrane. It is found in the secreted. Its subcellular location is the cell wall. In terms of biological role, a highly abundant outer membrane lipoprotein that controls the distance between the inner and outer membranes. The only protein known to be covalently linked to the peptidoglycan network (PGN). Also non-covalently binds the PGN. The link between the cell outer membrane and PGN contributes to maintenance of the structural and functional integrity of the cell envelope, and maintains the correct distance between the PGN and the outer membrane. The protein is Major outer membrane lipoprotein Lpp of Shigella flexneri.